The following is a 516-amino-acid chain: Maturase K (516 aa).

The protein belongs to the intron maturase 2 family. MatK subfamily.

Its subcellular location is the plastid. The protein resides in the chloroplast. Its function is as follows. Usually encoded in the trnK tRNA gene intron. Probably assists in splicing its own and other chloroplast group II introns. In Colchicum speciosum (Giant meadow saffron), this protein is Maturase K.